A 159-amino-acid chain; its full sequence is Eukaryotic translation initiation factor 5A (159 aa).

At lysine 51 the chain carries Hypusine.

It belongs to the eIF-5A family. Post-translationally, lys-51 undergoes hypusination, a unique post-translational modification that consists in the addition of a butylamino group from spermidine to lysine side chain, leading to the formation of the unusual amino acid hypusine. eIF-5As are the only known proteins to undergo this modification, which is essential for their function.

It localises to the cytoplasm. Its function is as follows. Translation factor that promotes translation elongation and termination, particularly upon ribosome stalling at specific amino acid sequence contexts. Binds between the exit (E) and peptidyl (P) site of the ribosome and promotes rescue of stalled ribosome: specifically required for efficient translation of polyproline-containing peptides as well as other motifs that stall the ribosome. Acts as a ribosome quality control (RQC) cofactor by joining the RQC complex to facilitate peptidyl transfer during CAT tailing step. Functions as a regulator of autophagy. The protein is Eukaryotic translation initiation factor 5A of Drosophila melanogaster (Fruit fly).